The primary structure comprises 251 residues: MTTQSLEAEAKALNDKLESLDLAGRLAMVAGLDGRAVFTTSLGIEDQVITAAIGINRLDIEVATLKTGRLFNETVALVEETEETYNILIKRYYPEKADIEAYVAQYGMNGFYESVEARHACCGVRKLKPLARALEGASYWITGLRRGQSGNRATTPFAEADLERGLIKINPLADWDIETIRAHVAAEAIPVNPLHGRGYPSIGCEPCTRAIKPGEPERAGRWWWENDEKRECGLHVAEAASSIIPNASSAA.

The [4Fe-4S] cluster site is built by C121, C122, C204, and C207. The active-site Nucleophile; cysteine thiosulfonate intermediate is the C232.

The protein belongs to the PAPS reductase family. CysH subfamily. It depends on [4Fe-4S] cluster as a cofactor.

It is found in the cytoplasm. The enzyme catalyses [thioredoxin]-disulfide + sulfite + AMP + 2 H(+) = adenosine 5'-phosphosulfate + [thioredoxin]-dithiol. The protein operates within sulfur metabolism; hydrogen sulfide biosynthesis; sulfite from sulfate. In terms of biological role, catalyzes the formation of sulfite from adenosine 5'-phosphosulfate (APS) using thioredoxin as an electron donor. The chain is Adenosine 5'-phosphosulfate reductase from Sinorhizobium fredii (strain USDA 257).